The sequence spans 613 residues: Probable Xaa-Pro aminopeptidase P (613 aa).

Positions 408, 419, 517, and 531 each coordinate Mn(2+).

The protein belongs to the peptidase M24B family. Mn(2+) serves as cofactor.

The catalysed reaction is Release of any N-terminal amino acid, including proline, that is linked to proline, even from a dipeptide or tripeptide.. In terms of biological role, catalyzes the removal of a penultimate prolyl residue from the N-termini of peptides. This Penicillium rubens (strain ATCC 28089 / DSM 1075 / NRRL 1951 / Wisconsin 54-1255) (Penicillium chrysogenum) protein is Probable Xaa-Pro aminopeptidase P (ampp).